The primary structure comprises 301 residues: F1 operon positive regulatory protein (301 aa).

Positions 8-107 constitute an HTH araC/xylS-type domain; the sequence is NSIIQYIEEN…GYTPRQYRMI (100 aa). DNA-binding regions (H-T-H motif) lie at residues 26–47 and 74–97; these read DCLV…KEYV and IIEI…KKIF.

Its function is as follows. Positive regulator of F1 operon expression. This Yersinia pestis protein is F1 operon positive regulatory protein (caf1R).